Reading from the N-terminus, the 571-residue chain is Urease subunit alpha (571 aa).

In terms of domain architecture, Urease spans 129–571 (GGIDSHIHFI…LPMAQRYFLF (443 aa)). 3 residues coordinate Ni(2+): H134, H136, and K217. N6-carboxylysine is present on K217. Residue H219 participates in substrate binding. 2 residues coordinate Ni(2+): H246 and H272. The active-site Proton donor is H320. Residue D360 coordinates Ni(2+).

This sequence belongs to the metallo-dependent hydrolases superfamily. Urease alpha subunit family. In terms of assembly, heterotrimer of UreA (gamma), UreB (beta) and UreC (alpha) subunits. Three heterotrimers associate to form the active enzyme. The cofactor is Ni cation. Post-translationally, carboxylation allows a single lysine to coordinate two nickel ions.

Its subcellular location is the cytoplasm. It carries out the reaction urea + 2 H2O + H(+) = hydrogencarbonate + 2 NH4(+). It functions in the pathway nitrogen metabolism; urea degradation; CO(2) and NH(3) from urea (urease route): step 1/1. This is Urease subunit alpha from Cupriavidus necator (strain ATCC 17699 / DSM 428 / KCTC 22496 / NCIMB 10442 / H16 / Stanier 337) (Ralstonia eutropha).